The following is a 317-amino-acid chain: Melanocyte-stimulating hormone receptor (317 aa).

Topologically, residues 1–37 (MAVQGSQRRLLGSLNSTPTAIPQLGLAANQTGARCLE) are extracellular. Asparagine 29 carries N-linked (GlcNAc...) asparagine glycosylation. The chain crosses the membrane as a helical span at residues 38 to 63 (VSIPDGLFLSLGLVSLVENMLVVATI). At 64–72 (AKNRNLHSP) the chain is on the cytoplasmic side. A helical membrane pass occupies residues 73 to 93 (MYCFICCLALSDLLVSGSNVL). Over 94–118 (ETAVILLLEAGALVARAAVLQQVDN) the chain is Extracellular. Residues 119–140 (VIDVITCSSMLSSLCFLGAIAV) traverse the membrane as a helical segment. At 141-163 (DRYISIFYALRYHSIVTLPRARR) the chain is on the cytoplasmic side. The helical transmembrane segment at 164–183 (AIAAIWVASVLFSTLFIAYC) threads the bilayer. The Extracellular portion of the chain corresponds to 184 to 191 (DHTAVLLC). Residues 192–211 (LVVFFLAVLVLMAVLYVHML) form a helical membrane-spanning segment. Topologically, residues 212–240 (ARACQHAQGIARLHKRQRPVHQGFGLKGA) are cytoplasmic. A helical membrane pass occupies residues 241-266 (VTLTILLGIFFLCWGPFFLHLTLIVL). The Extracellular portion of the chain corresponds to 267 to 279 (CPEHPTCGCIFKN). Residues 280-300 (FNLFLALIICNAIIDPLIYAF) traverse the membrane as a helical segment. Over 301-317 (HSQELRRTLKEVLTCSW) the chain is Cytoplasmic. A lipid anchor (S-palmitoyl cysteine) is attached at cysteine 315.

The protein belongs to the G-protein coupled receptor 1 family. As to quaternary structure, interacts with MGRN1, but does not undergo MGRN1-mediated ubiquitination; this interaction competes with GNAS-binding and thus inhibits agonist-induced cAMP production. Interacts with OPN3; the interaction results in a decrease in MC1R-mediated cAMP signaling and ultimately a decrease in melanin production in melanocytes.

It localises to the cell membrane. Receptor for MSH (alpha, beta and gamma) and ACTH. The activity of this receptor is mediated by G proteins which activate adenylate cyclase. Mediates melanogenesis, the production of eumelanin (black/brown) and phaeomelanin (red/yellow), via regulation of cAMP signaling in melanocytes. This chain is Melanocyte-stimulating hormone receptor (MC1R), found in Pan troglodytes (Chimpanzee).